The primary structure comprises 464 residues: DNA primase DnaG (464 aa).

In terms of domain architecture, Toprim spans 171-245 (DTIIIVEGRA…DIDYVARAPK (75 aa)). Mg(2+)-binding residues include Glu177, Asp219, and Asp221.

It belongs to the archaeal DnaG primase family. Forms a ternary complex with MCM helicase and DNA. Mg(2+) is required as a cofactor.

It carries out the reaction ssDNA + n NTP = ssDNA/pppN(pN)n-1 hybrid + (n-1) diphosphate.. RNA polymerase that catalyzes the synthesis of short RNA molecules used as primers for DNA polymerase during DNA replication. This is DNA primase DnaG from Methanococcus aeolicus (strain ATCC BAA-1280 / DSM 17508 / OCM 812 / Nankai-3).